Consider the following 185-residue polypeptide: NADH-ubiquinone oxidoreductase chain 6 (185 aa).

Helical transmembrane passes span 3–23 (SLFMIFSLGIVGASLMVISTP), 28–48 (SVFWLVIAFVNAAVMFISLGL), 54–74 (IFIIVYVGAIAILFLFVIMLI), 87–107 (HFLPIGLSVIFLFYSLLTNSP), and 134–154 (ELVLIASLVLLVAMIGAILLA).

The protein belongs to the complex I subunit 6 family.

It localises to the mitochondrion membrane. It catalyses the reaction a ubiquinone + NADH + 5 H(+)(in) = a ubiquinol + NAD(+) + 4 H(+)(out). Its function is as follows. Core subunit of the mitochondrial membrane respiratory chain NADH dehydrogenase (Complex I) that is believed to belong to the minimal assembly required for catalysis. Complex I functions in the transfer of electrons from NADH to the respiratory chain. The immediate electron acceptor for the enzyme is believed to be ubiquinone. This is NADH-ubiquinone oxidoreductase chain 6 (ND6) from Sarcophyton glaucum (Toadstool umbrella leather coral).